A 596-amino-acid chain; its full sequence is Capsid protein VP1 (596 aa).

The protein belongs to the microviridae F protein family.

The protein resides in the virion. The protein localises to the host cytoplasm. In terms of biological role, assembles to form an icosahedral capsid with a T=1 symmetry. The polypeptide is Capsid protein VP1 (Chlamydia phage 1 (Bacteriophage Chp1)).